The following is a 165-amino-acid chain: Protein SprT (165 aa).

The region spanning 22–163 (LAQANLKLDR…RCVHCGEPLV (142 aa)) is the SprT-like domain. His-78 lines the Zn(2+) pocket. Glu-79 is a catalytic residue. His-82 is a Zn(2+) binding site.

This sequence belongs to the SprT family. Zn(2+) serves as cofactor.

It is found in the cytoplasm. This chain is Protein SprT, found in Salmonella agona (strain SL483).